The primary structure comprises 112 residues: C-C motif chemokine 27 (112 aa).

The first 24 residues, 1–24 (MKGPPTFCSLLLLSLLLSPDPTAA), serve as a signal peptide directing secretion. 2 cysteine pairs are disulfide-bonded: cysteine 33–cysteine 62 and cysteine 34–cysteine 77.

Belongs to the intercrine beta (chemokine CC) family. As to quaternary structure, monomer, dimer, and tetramer. Heparin avidly promotes oligomerization. Interacts with TNFAIP6 (via Link domain). In terms of tissue distribution, testis, thymus, placenta, ovary and skin.

Its subcellular location is the secreted. In terms of biological role, chemotactic factor that attracts skin-associated memory T-lymphocytes. May play a role in mediating homing of lymphocytes to cutaneous sites. Binds to CCR10. The chain is C-C motif chemokine 27 (CCL27) from Homo sapiens (Human).